The primary structure comprises 784 residues: Transcription factor Sp1 (784 aa).

The segment at 1–95 (MSDQDHSMDE…PSQSGGTGEL (95 aa)) is disordered. At serine 2 the chain carries N-acetylserine. A phosphoserine mark is found at serine 2 and serine 7. A repressor domain region spans residues 2-84 (SDQDHSMDEV…SPNENSNNSQ (83 aa)). Lysine 16 participates in a covalent cross-link: Glycyl lysine isopeptide (Lys-Gly) (interchain with G-Cter in SUMO); alternate. Lysine 16 participates in a covalent cross-link: Glycyl lysine isopeptide (Lys-Gly) (interchain with G-Cter in SUMO2); alternate. The segment covering 23-34 (GNNGGSGNGGGA) has biased composition (gly residues). The span at 37–49 (SQTRSSSTGSSSS) shows a compositional bias: low complexity. The residue at position 61 (serine 61) is a Phosphoserine. Residues 74–87 (ESPNENSNNSQGPS) are compositionally biased toward low complexity. Serine 103 carries the post-translational modification Phosphoserine; by ATM. The segment covering 111–125 (IISSSSGATPTSKEQ) has biased composition (polar residues). Residues 111–144 (IISSSSGATPTSKEQSGNSTNGSNGSESSKNRTV) are disordered. Residues 126–138 (SGNSTNGSNGSES) are compositionally biased toward low complexity. Positions 148 to 253 (QYVVAATPNL…ANNVLSGQTQ (106 aa)) are transactivation domain A (Gln-rich). Residues 263-497 (NGNITLLPVN…PMQGVSLGQT (235 aa)) are transactivation domain B (Gln-rich). The residue at position 280 (threonine 280) is a Phosphothreonine; by MAPK8. Disordered stretches follow at residues 282–303 (SSQAGTISSSGSQESSSQPVTS) and 333–398 (TTTS…QTQQ). Composition is skewed to low complexity over residues 344 to 357 (TSSGSSGTSSQGQT) and 373 to 398 (QQNQTSGGSLQGSQQKEGEQSQQTQQ). Threonine 455 carries the post-translational modification Phosphothreonine; by MAPK1 and MAPK3. Positions 464-472 (VSWQTLQLQ) match the 9aaTAD motif. The O-linked (GlcNAc) serine glycan is linked to serine 493. A transactivation domain C (highly charged) region spans residues 498–611 (SSSNTTLTPI…REACTCPYCK (114 aa)). A disordered region spans residues 566 to 598 (QLGLHGSGGDGIHDETAGGEGENSSDLQPQAGR). The residue at position 613 (serine 613) is a Phosphoserine; alternate. An O-linked (GlcNAc) serine; alternate glycan is attached at serine 613. The interval 620–784 (DPGKKKQHIC…QSINISGNGF (165 aa)) is VZV IE62-binding. 3 C2H2-type zinc fingers span residues 627-656 (HICHIQGCGKVYGKTSHLRAHLRWHTGERP), 657-686 (FMCNWSYCGKRFTRSDELQRHKRTHTGEKK), and 687-714 (FACPECPKRFMRSDHLSKHIKTHQNKKG). Phosphothreonine; alternate is present on threonine 641. Threonine 641 carries an O-linked (GlcNAc) threonine; alternate glycan. O-linked (GlcNAc) serine; alternate glycosylation is present at serine 642. Position 642 is a phosphoserine; by PKC/PRKCZ; alternate (serine 642). Phosphothreonine; by PKC/PRKCZ is present on threonine 652. Position 669 is a phosphothreonine (threonine 669). Serine 671 is subject to Phosphoserine; by PKC/PRKCZ. Phosphothreonine; by PKC/PRKCZ is present on threonine 682. Phosphoserine; alternate occurs at positions 699 and 703. Serine 699 and serine 703 each carry an O-linked (GlcNAc) serine; alternate glycan. Lysine 704 bears the N6-acetyllysine mark. The interval 709-784 (HQNKKGGPGV…QSINISGNGF (76 aa)) is domain D. A Phosphothreonine; by MAPK1, MAPK3 and MAPK8 modification is found at threonine 738.

The protein belongs to the Sp1 C2H2-type zinc-finger protein family. Interacts with ATF7IP, ATF7IP2, BAHD1, POGZ, HCFC1, AATF and PHC2. Interacts with SV40 VP2/3 proteins. Interacts with SV40 major capsid protein VP1; this interaction leads to a cooperativity between the 2 proteins in DNA binding. Interacts with HLTF; the interaction may be required for basal transcriptional activity of HLTF. Interacts (deacetylated form) with EP300; the interaction enhances gene expression. Interacts with HDAC1 and JUN. Interacts with ELF1; the interaction is inhibited by glycosylation of SP1. Interaction with NFYA; the interaction is inhibited by glycosylation of SP1. Interacts with SMARCA4/BRG1. Interacts with ATF7IP and TBP. Interacts with MEIS2 isoform 4 and PBX1 isoform PBX1a. Interacts with EGR1. Interacts with RNF112 in an oxidative stress-regulated manner. Interacts with ZBTB7A; ZBTB7A prevents the binding to GC-rich motifs in promoters and represses the transcriptional activity of SP1. Interacts with DDX3X; this interaction potentiates SP1-induced CDKN1A/WAF1/CIP1 transcription. Interacts with MSX1; the interaction may inhibit MSX1 autoinactivation. Interacts with MSX3. In terms of assembly, (Microbial infection) Interacts with murine minute virus NS1; this interaction allows high levels of viral P38 promoter transactivation by NS1. In terms of processing, phosphorylated on multiple serine and threonine residues. Phosphorylation is coupled to ubiquitination, sumoylation and proteolytic processing. Phosphorylation on Ser-61 enhances proteolytic cleavage. Phosphorylation on Ser-7 enhances ubiquitination and protein degradation. Hyperphosphorylation on Ser-103 in response to DNA damage has no effect on transcriptional activity. MAPK1/MAPK3-mediated phosphorylation on Thr-455 and Thr-738 enhances VEGF transcription but, represses FGF2-triggered PDGFR-alpha transcription. Also implicated in the repression of RECK by ERBB2. Hyperphosphorylated on Thr-280 and Thr-738 during mitosis by MAPK8 shielding SP1 from degradation by the ubiquitin-dependent pathway. Phosphorylated in the zinc-finger domain by calmodulin-activated PKCzeta. Phosphorylation on Ser-642 by PKCzeta is critical for TSA-activated LHR gene expression through release of its repressor, p107. Phosphorylation on Thr-669, Ser-671 and Thr-682 is stimulated by angiotensin II via the AT1 receptor inducing increased binding to the PDGF-D promoter. This phosphorylation is increased in injured artey wall. Ser-61 and Thr-682 can both be dephosphorylated by PP2A during cell-cycle interphase. Dephosphorylation on Ser-61 leads to increased chromatin association during interphase and increases the transcriptional activity. On insulin stimulation, sequentially glycosylated and phosphorylated on several C-terminal serine and threonine residues. Acetylated. Acetylation/deacetylation events affect transcriptional activity. Deacetylation leads to an increase in the expression of the 12(s)-lipooxygenase gene through recruitment of p300 to the promoter. Deacetylated by HDAC6 which leads to increased expression of ENG and positive regulation of angiogenesis. Post-translationally, ubiquitinated. Ubiquitination occurs on the C-terminal proteolytically-cleaved peptide and is triggered by phosphorylation. In terms of processing, sumoylated with SUMO1. Sumoylation modulates proteolytic cleavage of the N-terminal repressor domain. Sumoylation levels are attenuated during tumorigenesis. Phosphorylation mediates SP1 desumoylation. Proteolytic cleavage in the N-terminal repressor domain is prevented by sumoylation. The C-terminal cleaved product is susceptible to degradation. Post-translationally, O-glycosylated; Contains 8 N-acetylglucosamine side chains. Levels are controlled by insulin and the SP1 phosphorylation states. Insulin-mediated O-glycosylation locates SP1 to the nucleus, where it is sequentially deglycosylated and phosphorylated. O-glycosylation affects transcriptional activity through disrupting the interaction with a number of transcription factors including ELF1 and NFYA. Inhibited by peroxisomome proliferator receptor gamma (PPARgamma).

The protein localises to the nucleus. It is found in the cytoplasm. In terms of biological role, transcription factor that can activate or repress transcription in response to physiological and pathological stimuli. Binds with high affinity to GC-rich motifs and regulates the expression of a large number of genes involved in a variety of processes such as cell growth, apoptosis, differentiation and immune responses. Highly regulated by post-translational modifications (phosphorylations, sumoylation, proteolytic cleavage, glycosylation and acetylation). Also binds the PDGFR-alpha G-box promoter. May have a role in modulating the cellular response to DNA damage. Implicated in chromatin remodeling. Plays a role in the recruitment of SMARCA4/BRG1 on the c-FOS promoter Plays an essential role in the regulation of FE65 gene expression. Positively regulates the transcription of the core clock component BMAL1. Plays a role in protecting cells against oxidative stress following brain injury by regulating the expression of RNF112. The protein is Transcription factor Sp1 (Sp1) of Mus musculus (Mouse).